Consider the following 163-residue polypeptide: Photosystem II extrinsic protein V (163 aa).

The signal sequence occupies residues 1-26; that stretch reads MLKRSSWLAALLGLLTVVSTSTHTYA. The heme c site is built by Cys63, Cys66, His67, and His118.

Belongs to the cytochrome c family. PsbV subfamily. As to quaternary structure, PSII is composed of 1 copy each of membrane proteins PsbA, PsbB, PsbC, PsbD, PsbE, PsbF, PsbH, PsbI, PsbJ, PsbK, PsbL, PsbM, PsbT, PsbY, PsbZ, Psb30/Ycf12, at least 3 peripheral proteins of the oxygen-evolving complex and a large number of cofactors. It forms dimeric complexes. The extrinsic subunits in red algae are PsbO (OEC33), PsbQ', cytochrome c-550 and PsbU. Heme c is required as a cofactor.

It localises to the plastid. The protein resides in the chloroplast thylakoid membrane. Functionally, one of the extrinsic, lumenal subunits of photosystem II (PSII). PSII is a light-driven water plastoquinone oxidoreductase, using light energy to abstract electrons from H(2)O, generating a proton gradient subsequently used for ATP formation. The extrinsic proteins stabilize the structure of photosystem II oxygen-evolving complex (OEC), the ion environment of oxygen evolution and protect the OEC against heat-induced inactivation. In Pyropia yezoensis (Susabi-nori), this protein is Photosystem II extrinsic protein V.